The primary structure comprises 546 residues: Carotenoid 9,10(9',10')-cleavage dioxygenase (546 aa).

Fe cation contacts are provided by His-226, His-274, His-340, and His-530.

Belongs to the carotenoid oxygenase family. Requires Fe(2+) as cofactor. As to expression, in vegetative and floral tissues.

Its subcellular location is the cytoplasm. It carries out the reaction all-trans-zeaxanthin + 2 O2 = 4,9-dimethyldodeca-2,4,6,8,10-pentaenedial + 2 (3R)-hydroxy-beta-ionone. In terms of biological role, cleaves a variety of carotenoids symmetrically at both the 9-10 and 9'-10' double bonds. Catalyzes the formation of 4,9-dimethyldodeca-2,4,6,8,10-pentaene-1,12-dialdehyde and probably hydroxydihydro-beta-ionone from zeaxanthin. The protein is Carotenoid 9,10(9',10')-cleavage dioxygenase (CCD) of Crocus sativus (Saffron).